Consider the following 221-residue polypeptide: 7-carboxy-7-deazaguanine synthase (221 aa).

Substrate-binding positions include 12–14 and Arg27; that span reads ING. Residues 18-216 enclose the Radical SAM core domain; the sequence is KSGQLSVFIR…IQIHKIIWNP (199 aa). 3 residues coordinate [4Fe-4S] cluster: Cys31, Cys35, and Cys38. Thr40 contacts Mg(2+). Thr73 is a binding site for substrate. Gly75 is an S-adenosyl-L-methionine binding site.

It belongs to the radical SAM superfamily. 7-carboxy-7-deazaguanine synthase family. In terms of assembly, homodimer. [4Fe-4S] cluster is required as a cofactor. The cofactor is S-adenosyl-L-methionine. Mg(2+) serves as cofactor.

The enzyme catalyses 6-carboxy-5,6,7,8-tetrahydropterin + H(+) = 7-carboxy-7-deazaguanine + NH4(+). It participates in purine metabolism; 7-cyano-7-deazaguanine biosynthesis. Catalyzes the complex heterocyclic radical-mediated conversion of 6-carboxy-5,6,7,8-tetrahydropterin (CPH4) to 7-carboxy-7-deazaguanine (CDG), a step common to the biosynthetic pathways of all 7-deazapurine-containing compounds. This Clostridium acetobutylicum (strain ATCC 824 / DSM 792 / JCM 1419 / IAM 19013 / LMG 5710 / NBRC 13948 / NRRL B-527 / VKM B-1787 / 2291 / W) protein is 7-carboxy-7-deazaguanine synthase.